A 256-amino-acid chain; its full sequence is Zinc metalloprotease (256 aa).

Histidine 74 serves as the catalytic Proton donor.

The protein belongs to the peptidase M4 family. Zn(2+) serves as cofactor.

Its subcellular location is the secreted. In terms of biological role, may play a role in ulcer formation. Proteolytic digestion of gastric mucus has been suggested as an important mechanism by which its pathogenicity is at least partly exerted. In Helicobacter pylori (Campylobacter pylori), this protein is Zinc metalloprotease (hap).